The sequence spans 152 residues: MYAIIRIRGRTGIKKNIADTLDMLNLTRISHAVVIPETPSYKGMLQKAKDYITWGEVSEDTFKLLVSERGRLPGNKRVTDEYVKENTDYDSVEALAVAIYNEETTLKDSGLKPLFRLNPPRKGYENTKKTFVEGGSLGYRSEEINELLEKMI.

Belongs to the universal ribosomal protein uL30 family. As to quaternary structure, part of the 50S ribosomal subunit.

This chain is Large ribosomal subunit protein uL30, found in Methanosphaera stadtmanae (strain ATCC 43021 / DSM 3091 / JCM 11832 / MCB-3).